Reading from the N-terminus, the 222-residue chain is Beta-casein (222 aa).

The signal sequence occupies residues 1–15 (MKVLILACLVALAIA). Position 27 is a phosphothreonine (Thr-27). Residues Ser-30, Ser-32, Ser-33, and Ser-34 each carry the phosphoserine modification.

This sequence belongs to the beta-casein family. Mammary gland specific. Secreted in milk.

The protein resides in the secreted. Functionally, important role in determination of the surface properties of the casein micelles. This Capra hircus (Goat) protein is Beta-casein (CSN2).